A 231-amino-acid chain; its full sequence is Ion-translocating oxidoreductase complex subunit E (231 aa).

A run of 6 helical transmembrane segments spans residues 18-38 (ALVQLLGLCPLLAVTSTATNA), 39-59 (LGLGLATTLVLTLTNLTISTL), 63-83 (TPSEIRIPIYVMIIASVVSAV), 86-106 (LINAYAFGLYQSLGIFIPLIV), 125-145 (ALSALDGFSIGMGATCAMFVL), and 182-202 (PFLLAMLPPGAFIGLGLMLAG).

It belongs to the NqrDE/RnfAE family. In terms of assembly, the complex is composed of six subunits: RsxA, RsxB, RsxC, RsxD, RsxE and RsxG.

The protein resides in the cell inner membrane. Part of a membrane-bound complex that couples electron transfer with translocation of ions across the membrane. Required to maintain the reduced state of SoxR. This chain is Ion-translocating oxidoreductase complex subunit E, found in Escherichia coli O6:K15:H31 (strain 536 / UPEC).